Reading from the N-terminus, the 66-residue chain is UPF0370 protein CKO_00315 (66 aa).

Residues 4 to 24 (LAKYWWILVLVFLVGVLINVI) form a helical membrane-spanning segment. Residues 39 to 66 (KPELPPHRDFNDKWDDDDDWPKKDQPKK) form a disordered region. The segment covering 42 to 51 (LPPHRDFNDK) has biased composition (basic and acidic residues).

It belongs to the UPF0370 family.

The protein localises to the cell membrane. In Citrobacter koseri (strain ATCC BAA-895 / CDC 4225-83 / SGSC4696), this protein is UPF0370 protein CKO_00315.